Reading from the N-terminus, the 564-residue chain is Nucleoprotein (564 aa).

A binding site for the cap structure m7GTP region spans residues 54 to 236; sequence LRKNKRGEED…VTKDESSINI (183 aa). The Mn(2+) site is built by D380 and E382. Residues E390, C497, H500, and C525 each contribute to the Zn(2+) site. Residue D529 coordinates Mn(2+).

Belongs to the arenaviridae nucleocapsid protein family. In terms of assembly, homomultimerizes to form the nucleocapsid. Binds to viral genomic RNA. Interacts with glycoprotein G2. Interacts with protein Z; this interaction probably directs the encapsidated genome to budding sites. Interacts with protein L; this interaction does not interfere with Z-L interaction. Interacts with host IKBKE (via Protein kinase domain); the interaction inhibits IKBKE kinase activity.

It is found in the virion. The protein localises to the host cytoplasm. Its function is as follows. Encapsidates the genome, protecting it from nucleases. The encapsidated genomic RNA is termed the nucleocapsid (NC). Serves as template for viral transcription and replication. The increased presence of protein N in host cell does not seem to trigger the switch from transcription to replication as observed in other negative strain RNA viruses. Through the interaction with host IKBKE, strongly inhibits the phosphorylation and nuclear translocation of host IRF3, a protein involved in interferon activation pathway, leading to the inhibition of interferon-beta and IRF3-dependent promoters activation. Also encodes a functional 3'-5' exoribonuclease that degrades preferentially dsRNA substrates and thereby participates in the suppression of interferon induction. This Calomys callosus (Large vesper mouse) protein is Nucleoprotein.